The sequence spans 325 residues: uncharacterized protein (325 aa).

Disordered stretches follow at residues 32–65 (LSTP…VPPI) and 99–152 (GDSL…ASSG). Positions 153–291 (LVPSLNRLRI…LFTGVRDGYY (139 aa)) constitute a Globin domain.

This is an uncharacterized protein from Caenorhabditis elegans.